The following is a 111-amino-acid chain: Cell cycle protein GpsB (111 aa).

Residues 38–72 are a coiled coil; it reads IKDYEAFHKEFEQLKQQNARLKRELEEQKLAATQV.

Belongs to the GpsB family. Forms polymers through the coiled coil domains. Interacts with PBP1, MreC and EzrA.

It localises to the cytoplasm. Functionally, divisome component that associates with the complex late in its assembly, after the Z-ring is formed, and is dependent on DivIC and PBP2B for its recruitment to the divisome. Together with EzrA, is a key component of the system that regulates PBP1 localization during cell cycle progression. Its main role could be the removal of PBP1 from the cell pole after pole maturation is completed. Also contributes to the recruitment of PBP1 to the division complex. Not essential for septum formation. The protein is Cell cycle protein GpsB of Bacillus cereus (strain ATCC 10987 / NRS 248).